The primary structure comprises 89 residues: Small ribosomal subunit protein uS19 (89 aa).

This sequence belongs to the universal ribosomal protein uS19 family.

In terms of biological role, protein S19 forms a complex with S13 that binds strongly to the 16S ribosomal RNA. This Stenotrophomonas maltophilia (strain R551-3) protein is Small ribosomal subunit protein uS19.